The following is a 307-amino-acid chain: Ribosomal RNA small subunit methyltransferase H (307 aa).

S-adenosyl-L-methionine contacts are provided by residues 34 to 36, D54, F79, D101, and Q108; that span reads GGH.

Belongs to the methyltransferase superfamily. RsmH family.

It localises to the cytoplasm. It catalyses the reaction cytidine(1402) in 16S rRNA + S-adenosyl-L-methionine = N(4)-methylcytidine(1402) in 16S rRNA + S-adenosyl-L-homocysteine + H(+). Its function is as follows. Specifically methylates the N4 position of cytidine in position 1402 (C1402) of 16S rRNA. The sequence is that of Ribosomal RNA small subunit methyltransferase H from Ruthia magnifica subsp. Calyptogena magnifica.